The sequence spans 546 residues: Phosphomethylpyrimidine synthase (546 aa).

A compositionally biased stretch (polar residues) spans 1-19; that stretch reads MSTPSSRSQAPETVTTGPI. A disordered region spans residues 1-20; sequence MSTPSSRSQAPETVTTGPIQ. Substrate-binding positions include N146, M175, Y204, H240, 260 to 262, 301 to 304, and E340; these read SRG and DGLR. A Zn(2+)-binding site is contributed by H344. Y367 provides a ligand contact to substrate. Residue H408 participates in Zn(2+) binding. Residues C488, C491, and C496 each coordinate [4Fe-4S] cluster.

Belongs to the ThiC family. The cofactor is [4Fe-4S] cluster.

The enzyme catalyses 5-amino-1-(5-phospho-beta-D-ribosyl)imidazole + S-adenosyl-L-methionine = 4-amino-2-methyl-5-(phosphooxymethyl)pyrimidine + CO + 5'-deoxyadenosine + formate + L-methionine + 3 H(+). The protein operates within cofactor biosynthesis; thiamine diphosphate biosynthesis. Functionally, catalyzes the synthesis of the hydroxymethylpyrimidine phosphate (HMP-P) moiety of thiamine from aminoimidazole ribotide (AIR) in a radical S-adenosyl-L-methionine (SAM)-dependent reaction. The sequence is that of Phosphomethylpyrimidine synthase from Mycobacteroides abscessus (strain ATCC 19977 / DSM 44196 / CCUG 20993 / CIP 104536 / JCM 13569 / NCTC 13031 / TMC 1543 / L948) (Mycobacterium abscessus).